Here is a 328-residue protein sequence, read N- to C-terminus: Ribose-phosphate pyrophosphokinase (328 aa).

ATP-binding positions include 39–41 (DGE) and 98–99 (RQ). The Mg(2+) site is built by His-132 and Asp-172. The active site involves Lys-195. D-ribose 5-phosphate contacts are provided by residues Arg-197, Asp-221, and 225-229 (DTGGT).

Belongs to the ribose-phosphate pyrophosphokinase family. Class I subfamily. Homohexamer. The cofactor is Mg(2+).

It localises to the cytoplasm. The catalysed reaction is D-ribose 5-phosphate + ATP = 5-phospho-alpha-D-ribose 1-diphosphate + AMP + H(+). It functions in the pathway metabolic intermediate biosynthesis; 5-phospho-alpha-D-ribose 1-diphosphate biosynthesis; 5-phospho-alpha-D-ribose 1-diphosphate from D-ribose 5-phosphate (route I): step 1/1. In terms of biological role, involved in the biosynthesis of the central metabolite phospho-alpha-D-ribosyl-1-pyrophosphate (PRPP) via the transfer of pyrophosphoryl group from ATP to 1-hydroxyl of ribose-5-phosphate (Rib-5-P). The protein is Ribose-phosphate pyrophosphokinase of Mycoplasma pneumoniae (strain ATCC 29342 / M129 / Subtype 1) (Mycoplasmoides pneumoniae).